A 232-amino-acid chain; its full sequence is Cytidylate kinase (232 aa).

Residue 11-19 (GPAGAGKST) coordinates ATP.

Belongs to the cytidylate kinase family. Type 1 subfamily.

It is found in the cytoplasm. It carries out the reaction CMP + ATP = CDP + ADP. The catalysed reaction is dCMP + ATP = dCDP + ADP. In Roseiflexus castenholzii (strain DSM 13941 / HLO8), this protein is Cytidylate kinase.